Here is a 258-residue protein sequence, read N- to C-terminus: Peptidase inhibitor 15 (258 aa).

Residues 1-21 (MIEMISISAAFLLSLLCETCG) form the signal peptide. Positions 22-60 (LVLPKSSDLAIAASNYTIIKPDLSARLDPVKAPKARRKR) are excised as a propeptide. N-linked (GlcNAc...) asparagine glycosylation is found at N36 and N124. Positions 71-211 (VEYHNQVRGK…RRAVYLVCNY (141 aa)) constitute an SCP domain.

It belongs to the CRISP family.

Its subcellular location is the secreted. Its function is as follows. Serine protease inhibitor which displays weak inhibitory activity against trypsin. May be involved in facial patterning during embryonic development. This chain is Peptidase inhibitor 15 (pi15), found in Xenopus laevis (African clawed frog).